A 333-amino-acid polypeptide reads, in one-letter code: Holliday junction branch migration complex subunit RuvB (333 aa).

The interval 1-182 is large ATPase domain (RuvB-L); the sequence is MDERLLSGES…FGVLSRLEYY (182 aa). Residues leucine 21, arginine 22, glycine 63, lysine 66, threonine 67, threonine 68, 129-131, arginine 172, tyrosine 182, and arginine 219 each bind ATP; that span reads EDF. Threonine 67 is a binding site for Mg(2+). The interval 183 to 253 is small ATPAse domain (RuvB-S); it reads TVDQLSAIVE…ITQMALELLQ (71 aa). Residues 256–333 are head domain (RuvB-H); that stretch reads KLGLDHIDHK…QHFGMEMPKI (78 aa). Arginine 311 and arginine 316 together coordinate DNA.

The protein belongs to the RuvB family. As to quaternary structure, homohexamer. Forms an RuvA(8)-RuvB(12)-Holliday junction (HJ) complex. HJ DNA is sandwiched between 2 RuvA tetramers; dsDNA enters through RuvA and exits via RuvB. An RuvB hexamer assembles on each DNA strand where it exits the tetramer. Each RuvB hexamer is contacted by two RuvA subunits (via domain III) on 2 adjacent RuvB subunits; this complex drives branch migration. In the full resolvosome a probable DNA-RuvA(4)-RuvB(12)-RuvC(2) complex forms which resolves the HJ.

Its subcellular location is the cytoplasm. It carries out the reaction ATP + H2O = ADP + phosphate + H(+). The RuvA-RuvB-RuvC complex processes Holliday junction (HJ) DNA during genetic recombination and DNA repair, while the RuvA-RuvB complex plays an important role in the rescue of blocked DNA replication forks via replication fork reversal (RFR). RuvA specifically binds to HJ cruciform DNA, conferring on it an open structure. The RuvB hexamer acts as an ATP-dependent pump, pulling dsDNA into and through the RuvAB complex. RuvB forms 2 homohexamers on either side of HJ DNA bound by 1 or 2 RuvA tetramers; 4 subunits per hexamer contact DNA at a time. Coordinated motions by a converter formed by DNA-disengaged RuvB subunits stimulates ATP hydrolysis and nucleotide exchange. Immobilization of the converter enables RuvB to convert the ATP-contained energy into a lever motion, pulling 2 nucleotides of DNA out of the RuvA tetramer per ATP hydrolyzed, thus driving DNA branch migration. The RuvB motors rotate together with the DNA substrate, which together with the progressing nucleotide cycle form the mechanistic basis for DNA recombination by continuous HJ branch migration. Branch migration allows RuvC to scan DNA until it finds its consensus sequence, where it cleaves and resolves cruciform DNA. The protein is Holliday junction branch migration complex subunit RuvB of Bacillus cytotoxicus (strain DSM 22905 / CIP 110041 / 391-98 / NVH 391-98).